The following is a 206-amino-acid chain: Xanthine phosphoribosyltransferase (206 aa).

2 residues coordinate xanthine: L28 and N35. Position 136–140 (A136–A140) interacts with 5-phospho-alpha-D-ribose 1-diphosphate. Position 164 (K164) interacts with xanthine.

It belongs to the purine/pyrimidine phosphoribosyltransferase family. Xpt subfamily. Homodimer.

Its subcellular location is the cytoplasm. It catalyses the reaction XMP + diphosphate = xanthine + 5-phospho-alpha-D-ribose 1-diphosphate. It functions in the pathway purine metabolism; XMP biosynthesis via salvage pathway; XMP from xanthine: step 1/1. In terms of biological role, converts the preformed base xanthine, a product of nucleic acid breakdown, to xanthosine 5'-monophosphate (XMP), so it can be reused for RNA or DNA synthesis. The protein is Xanthine phosphoribosyltransferase of Oenococcus oeni (strain ATCC BAA-331 / PSU-1).